The following is a 304-amino-acid chain: Quinolinate synthase (304 aa).

His23 and Ser40 together coordinate iminosuccinate. Cys86 lines the [4Fe-4S] cluster pocket. Iminosuccinate-binding positions include 112 to 114 (YVN) and Ser129. Cys173 provides a ligand contact to [4Fe-4S] cluster. Iminosuccinate-binding positions include 199–201 (HPE) and Thr216. Cys260 contributes to the [4Fe-4S] cluster binding site.

It belongs to the quinolinate synthase family. Type 2 subfamily. The cofactor is [4Fe-4S] cluster.

It is found in the cytoplasm. The enzyme catalyses iminosuccinate + dihydroxyacetone phosphate = quinolinate + phosphate + 2 H2O + H(+). Its pathway is cofactor biosynthesis; NAD(+) biosynthesis; quinolinate from iminoaspartate: step 1/1. In terms of biological role, catalyzes the condensation of iminoaspartate with dihydroxyacetone phosphate to form quinolinate. The polypeptide is Quinolinate synthase (Methanothermobacter thermautotrophicus (strain ATCC 29096 / DSM 1053 / JCM 10044 / NBRC 100330 / Delta H) (Methanobacterium thermoautotrophicum)).